Consider the following 330-residue polypeptide: Ribosomal RNA small subunit methyltransferase H (330 aa).

S-adenosyl-L-methionine contacts are provided by residues glycine 50–histidine 52, aspartate 69, leucine 103, aspartate 117, and glutamine 124.

It belongs to the methyltransferase superfamily. RsmH family.

Its subcellular location is the cytoplasm. It carries out the reaction cytidine(1402) in 16S rRNA + S-adenosyl-L-methionine = N(4)-methylcytidine(1402) in 16S rRNA + S-adenosyl-L-homocysteine + H(+). Specifically methylates the N4 position of cytidine in position 1402 (C1402) of 16S rRNA. The sequence is that of Ribosomal RNA small subunit methyltransferase H from Saccharopolyspora erythraea (strain ATCC 11635 / DSM 40517 / JCM 4748 / NBRC 13426 / NCIMB 8594 / NRRL 2338).